A 205-amino-acid chain; its full sequence is Pre-rRNA-processing protein TSR2 (205 aa).

The interval 144–205 (SKRVVHIEGD…LVQPKGRRKH (62 aa)) is disordered. The segment covering 152–177 (GDDDEDDEDVEDYDDEDEDEEMDEVV) has biased composition (acidic residues).

The protein belongs to the TSR2 family. As to quaternary structure, interacts with RPS26A.

It localises to the cytoplasm. The protein resides in the nucleus. In terms of biological role, required for 20S pre-rRNA processing. The sequence is that of Pre-rRNA-processing protein TSR2 from Saccharomyces cerevisiae (strain ATCC 204508 / S288c) (Baker's yeast).